Here is a 619-residue protein sequence, read N- to C-terminus: Very-long-chain aldehyde decarbonylase GL1-1 (619 aa).

5 consecutive transmembrane segments (helical) span residues 44–64 (LLLL…WSSF), 93–113 (DNFL…FPSL), 123–143 (GLAV…YAAH), 190–210 (AAAC…VLGF), and 322–342 (PFLL…WAWS). The 141-residue stretch at 129-269 (LLHVAATEPL…MPLFDLIGGT (141 aa)) folds into the Fatty acid hydroxylase domain.

Belongs to the sterol desaturase family. In terms of assembly, homodimer.

The protein resides in the endoplasmic reticulum membrane. The catalysed reaction is a long-chain fatty aldehyde + 2 NADPH + O2 + H(+) = a long-chain alkane + formate + 2 NADP(+) + H2O. Aldehyde decarbonylase involved in the conversion of aldehydes to alkanes. Core component of a very-long-chain alkane synthesis complex. This Oryza sativa subsp. indica (Rice) protein is Very-long-chain aldehyde decarbonylase GL1-1.